A 388-amino-acid polypeptide reads, in one-letter code: Deoxyguanosinetriphosphate triphosphohydrolase-like protein (388 aa).

The tract at residues 1-32 is disordered; sequence MSVGMAAPRAPYSCDPDRSRGRLFAEPPSRTR. An HD domain is found at 69-205; sequence RLTHSLEVAQ…AALADDIAYD (137 aa).

The protein belongs to the dGTPase family. Type 2 subfamily.

In Bradyrhizobium sp. (strain ORS 278), this protein is Deoxyguanosinetriphosphate triphosphohydrolase-like protein.